Reading from the N-terminus, the 546-residue chain is Histidine--tRNA ligase, mitochondrial (546 aa).

A mitochondrion-targeting transit peptide spans 1–20 (MLSRSLNKVVTSIKSSSIIR). L-histidine-binding positions include 129–131 (DLT), Arg-156, Gln-172, Asp-176, Arg-326, and 330–331 (YY).

Belongs to the class-II aminoacyl-tRNA synthetase family.

It is found in the cytoplasm. The protein resides in the mitochondrion. The catalysed reaction is tRNA(His) + L-histidine + ATP = L-histidyl-tRNA(His) + AMP + diphosphate + H(+). Its function is as follows. Catalyzes the aminoacylation of histidyl-tRNA in both the cytoplasm and the mitochondrion. The protein is Histidine--tRNA ligase, mitochondrial (HTS1) of Saccharomyces cerevisiae (strain ATCC 204508 / S288c) (Baker's yeast).